Here is a 344-residue protein sequence, read N- to C-terminus: L-rhamnose-proton symporter (344 aa).

Helical transmembrane passes span 4-24 (AITMGIFWHLIGAASAACFYA), 38-58 (WSVGGIVSWLILPWTISALLL), 68-88 (FNLSTLLPVFLFGAMWGIGNI), 101-121 (MGIGIAIGITLIVGTLMTPII), 137-157 (TLLGVFVALIGVGIVTRAGQL), 175-195 (LLLAVMCGIFSAGMSFAMNAA), 214-234 (LPSYVVIMGGGALVNLGFCFI), 259-279 (ILLSALGGLMWYLQFFFYAWG), 290-310 (MSWMLHMSFYVLCGGLVGLVL), and 321-341 (VAVLSLGCVVIIIAANIVGLG).

This sequence belongs to the L-rhamnose transporter (TC 2.A.7.6) family.

The protein resides in the cell inner membrane. The enzyme catalyses L-rhamnopyranose(in) + H(+)(in) = L-rhamnopyranose(out) + H(+)(out). Its function is as follows. Uptake of L-rhamnose across the cytoplasmic membrane with the concomitant transport of protons into the cell (symport system). The sequence is that of L-rhamnose-proton symporter from Salmonella agona (strain SL483).